The sequence spans 150 residues: D-aminoacyl-tRNA deacylase (150 aa).

The Gly-cisPro motif, important for rejection of L-amino acids motif lies at 138-139 (GP).

The protein belongs to the DTD family. Homodimer.

The protein localises to the cytoplasm. The enzyme catalyses glycyl-tRNA(Ala) + H2O = tRNA(Ala) + glycine + H(+). It catalyses the reaction a D-aminoacyl-tRNA + H2O = a tRNA + a D-alpha-amino acid + H(+). Functionally, an aminoacyl-tRNA editing enzyme that deacylates mischarged D-aminoacyl-tRNAs. Also deacylates mischarged glycyl-tRNA(Ala), protecting cells against glycine mischarging by AlaRS. Acts via tRNA-based rather than protein-based catalysis; rejects L-amino acids rather than detecting D-amino acids in the active site. By recycling D-aminoacyl-tRNA to D-amino acids and free tRNA molecules, this enzyme counteracts the toxicity associated with the formation of D-aminoacyl-tRNA entities in vivo and helps enforce protein L-homochirality. The chain is D-aminoacyl-tRNA deacylase from Azobacteroides pseudotrichonymphae genomovar. CFP2.